Consider the following 557-residue polypeptide: 2-succinyl-5-enolpyruvyl-6-hydroxy-3-cyclohexene-1-carboxylate synthase (557 aa).

Residues tyrosine 183–proline 206 are disordered.

This sequence belongs to the TPP enzyme family. MenD subfamily. In terms of assembly, homodimer. Requires Mg(2+) as cofactor. Mn(2+) serves as cofactor. It depends on thiamine diphosphate as a cofactor.

It carries out the reaction isochorismate + 2-oxoglutarate + H(+) = 5-enolpyruvoyl-6-hydroxy-2-succinyl-cyclohex-3-ene-1-carboxylate + CO2. It participates in quinol/quinone metabolism; 1,4-dihydroxy-2-naphthoate biosynthesis; 1,4-dihydroxy-2-naphthoate from chorismate: step 2/7. Its pathway is quinol/quinone metabolism; menaquinone biosynthesis. Functionally, catalyzes the thiamine diphosphate-dependent decarboxylation of 2-oxoglutarate and the subsequent addition of the resulting succinic semialdehyde-thiamine pyrophosphate anion to isochorismate to yield 2-succinyl-5-enolpyruvyl-6-hydroxy-3-cyclohexene-1-carboxylate (SEPHCHC). The protein is 2-succinyl-5-enolpyruvyl-6-hydroxy-3-cyclohexene-1-carboxylate synthase of Halorhodospira halophila (strain DSM 244 / SL1) (Ectothiorhodospira halophila (strain DSM 244 / SL1)).